A 181-amino-acid polypeptide reads, in one-letter code: Large ribosomal subunit protein uL5 (181 aa).

The protein belongs to the universal ribosomal protein uL5 family. As to quaternary structure, part of the 50S ribosomal subunit; part of the 5S rRNA/L5/L18/L25 subcomplex. Contacts the 5S rRNA and the P site tRNA. Forms a bridge to the 30S subunit in the 70S ribosome.

Its function is as follows. This is one of the proteins that bind and probably mediate the attachment of the 5S RNA into the large ribosomal subunit, where it forms part of the central protuberance. In the 70S ribosome it contacts protein S13 of the 30S subunit (bridge B1b), connecting the 2 subunits; this bridge is implicated in subunit movement. Contacts the P site tRNA; the 5S rRNA and some of its associated proteins might help stabilize positioning of ribosome-bound tRNAs. This chain is Large ribosomal subunit protein uL5, found in Helicobacter pylori (strain Shi470).